The chain runs to 623 residues: Activator of C kinase protein 1 (623 aa).

Residues 141 to 230 form a disordered region; sequence KESLGSPAVQ…GSSGGEDKLS (90 aa). Polar residues predominate over residues 152–161; the sequence is ASISSGNRIS. Residues 176 to 193 show a composition bias toward basic and acidic residues; that stretch reads SESRILQEKVYRTEEKAP. Residues lysine 184 and lysine 191 each participate in a glycyl lysine isopeptide (Lys-Gly) (interchain with G-Cter in ubiquitin) cross-link. The span at 206 to 215 shows a compositional bias: polar residues; the sequence is KINQPPTGSA. 4 Sel1-like repeats span residues 318 to 361, 408 to 444, 495 to 531, and 576 to 611; these read PPAM…KLNN, SACM…QKGD, PLAQ…AAQP, and ARTE…RMGF.

The polypeptide is Activator of C kinase protein 1 (ACK1) (Saccharomyces cerevisiae (strain ATCC 204508 / S288c) (Baker's yeast)).